Consider the following 77-residue polypeptide: Small ribosomal subunit protein uS17 (77 aa).

It belongs to the universal ribosomal protein uS17 family. As to quaternary structure, part of the 30S ribosomal subunit.

Functionally, one of the primary rRNA binding proteins, it binds specifically to the 5'-end of 16S ribosomal RNA. The polypeptide is Small ribosomal subunit protein uS17 (Rickettsia bellii (strain OSU 85-389)).